Consider the following 466-residue polypeptide: FBD-associated F-box protein At5g22730 (466 aa).

Residues 27-80 (EDLISKLPDSLITQILLYLPIKDIVRTSSLSSRWKSLWLLIPRLDLDSEEFQDY) enclose the F-box domain. The 52-residue stretch at 385–436 (DEPIIFSSVPRCLVSSLESVEIKKFNGRPAKMEVARYFLENSGVLQKLVLHL) folds into the FBD domain.

The polypeptide is FBD-associated F-box protein At5g22730 (Arabidopsis thaliana (Mouse-ear cress)).